We begin with the raw amino-acid sequence, 451 residues long: Phosphoglucosamine mutase (451 aa).

Ser-101 serves as the catalytic Phosphoserine intermediate. Mg(2+) is bound by residues Ser-101, Asp-243, Asp-245, and Asp-247. Ser-101 carries the phosphoserine modification.

Belongs to the phosphohexose mutase family. Mg(2+) is required as a cofactor. Post-translationally, activated by phosphorylation.

It catalyses the reaction alpha-D-glucosamine 1-phosphate = D-glucosamine 6-phosphate. In terms of biological role, catalyzes the conversion of glucosamine-6-phosphate to glucosamine-1-phosphate. This Thermodesulfovibrio yellowstonii (strain ATCC 51303 / DSM 11347 / YP87) protein is Phosphoglucosamine mutase.